Here is a 947-residue protein sequence, read N- to C-terminus: Translation initiation factor IF-2 (947 aa).

Residues 69 to 353 are disordered; it reads RRRKEVPQEE…TPKPQKKTEV (285 aa). Positions 81–108 are enriched in low complexity; sequence APPAAAEEPSSVDTAVAEEAPAEEVQPV. Residues 139–155 show a composition bias toward acidic residues; that stretch reads PVVEEVIAEPAVEEVVE. Basic and acidic residues-rich tracts occupy residues 215-226 and 246-262; these read VTKEKPKVEKAT and KRQE…ERPK. The segment covering 264–284 has biased composition (low complexity); it reads AKPSGGPAPRAKEAAPQAAVP. A compositionally biased stretch (basic and acidic residues) spans 327-337; that stretch reads QVYEPERDERR. A compositionally biased stretch (basic residues) spans 338–348; sequence MRRGKKTPKPQ. One can recognise a tr-type G domain in the interval 447–616; the sequence is PRPPVVTIMG…LLQAEVLELK (170 aa). Positions 456 to 463 are G1; it reads GHVDHGKT. 456–463 serves as a coordination point for GTP; the sequence is GHVDHGKT. Residues 481-485 are G2; that stretch reads GITQH. A G3 region spans residues 502–505; sequence DTPG. GTP is bound by residues 502–506 and 556–559; these read DTPGH and NKMD. Residues 556-559 form a G4 region; that stretch reads NKMD. The segment at 592–594 is G5; that stretch reads SAK.

Belongs to the TRAFAC class translation factor GTPase superfamily. Classic translation factor GTPase family. IF-2 subfamily.

The protein resides in the cytoplasm. Its function is as follows. One of the essential components for the initiation of protein synthesis. Protects formylmethionyl-tRNA from spontaneous hydrolysis and promotes its binding to the 30S ribosomal subunits. Also involved in the hydrolysis of GTP during the formation of the 70S ribosomal complex. This chain is Translation initiation factor IF-2, found in Syntrophotalea carbinolica (strain DSM 2380 / NBRC 103641 / GraBd1) (Pelobacter carbinolicus).